Reading from the N-terminus, the 138-residue chain is Drosulfakinins (138 aa).

A signal peptide spans 1–33; that stretch reads MGLRSCTHFATLVMPLWALAFCFLVLVPVPAQT. A propeptide spanning residues 34–73 is cleaved from the precursor; that stretch reads TSLQISKGDRRLQDLESNMGAESDQPNANLVGTSLSRFGD. A Phenylalanine amide modification is found at Phe82. Positions 86 to 108 are excised as a propeptide; it reads VPRPIIPIELDLLMDNDDENTKA. Tyr114 bears the Sulfotyrosine mark. At Phe119 the chain carries Phenylalanine amide. Position 131 is a sulfotyrosine (Tyr131). Phe136 is modified (phenylalanine amide).

Belongs to the gastrin/cholecystokinin family.

Its subcellular location is the secreted. Its function is as follows. Drosulfakinin-0 (DSK 0) plays diverse biological roles including regulating gut muscle contraction in adults but not in larvae. This is Drosulfakinins from Drosophila teissieri (Fruit fly).